The chain runs to 424 residues: Serine--tRNA ligase 1 (424 aa).

232-234 (TAE) provides a ligand contact to L-serine. 263–265 (RSE) is an ATP binding site. Glu286 is an L-serine binding site. ATP is bound at residue 350 to 353 (EISS). Ser386 lines the L-serine pocket.

It belongs to the class-II aminoacyl-tRNA synthetase family. Type-1 seryl-tRNA synthetase subfamily. As to quaternary structure, homodimer. The tRNA molecule binds across the dimer.

The protein localises to the cytoplasm. The catalysed reaction is tRNA(Ser) + L-serine + ATP = L-seryl-tRNA(Ser) + AMP + diphosphate + H(+). The enzyme catalyses tRNA(Sec) + L-serine + ATP = L-seryl-tRNA(Sec) + AMP + diphosphate + H(+). It participates in aminoacyl-tRNA biosynthesis; selenocysteinyl-tRNA(Sec) biosynthesis; L-seryl-tRNA(Sec) from L-serine and tRNA(Sec): step 1/1. Catalyzes the attachment of serine to tRNA(Ser). Is also able to aminoacylate tRNA(Sec) with serine, to form the misacylated tRNA L-seryl-tRNA(Sec), which will be further converted into selenocysteinyl-tRNA(Sec). This Clostridium acetobutylicum (strain ATCC 824 / DSM 792 / JCM 1419 / IAM 19013 / LMG 5710 / NBRC 13948 / NRRL B-527 / VKM B-1787 / 2291 / W) protein is Serine--tRNA ligase 1.